Reading from the N-terminus, the 438-residue chain is DNA polymerase IV 1 (438 aa).

In terms of domain architecture, UmuC spans 46 to 226 (LAHIDCDAFY…KPVTMIWGVG (181 aa)). Positions 50 and 143 each coordinate Mg(2+). Glu144 is a catalytic residue.

It belongs to the DNA polymerase type-Y family. Monomer. Mg(2+) is required as a cofactor.

It localises to the cytoplasm. It carries out the reaction DNA(n) + a 2'-deoxyribonucleoside 5'-triphosphate = DNA(n+1) + diphosphate. In terms of biological role, poorly processive, error-prone DNA polymerase involved in untargeted mutagenesis. Copies undamaged DNA at stalled replication forks, which arise in vivo from mismatched or misaligned primer ends. These misaligned primers can be extended by PolIV. Exhibits no 3'-5' exonuclease (proofreading) activity. May be involved in translesional synthesis, in conjunction with the beta clamp from PolIII. In Mesorhizobium japonicum (strain LMG 29417 / CECT 9101 / MAFF 303099) (Mesorhizobium loti (strain MAFF 303099)), this protein is DNA polymerase IV 1 (dinB1).